The primary structure comprises 824 residues: Glycerol-3-phosphate acyltransferase (824 aa).

The HXXXXD motif signature appears at 302–307; the sequence is CHRSHM.

It belongs to the GPAT/DAPAT family.

It localises to the cell inner membrane. It catalyses the reaction sn-glycerol 3-phosphate + an acyl-CoA = a 1-acyl-sn-glycero-3-phosphate + CoA. It participates in phospholipid metabolism; CDP-diacylglycerol biosynthesis; CDP-diacylglycerol from sn-glycerol 3-phosphate: step 1/3. This chain is Glycerol-3-phosphate acyltransferase, found in Actinobacillus pleuropneumoniae serotype 5b (strain L20).